Reading from the N-terminus, the 438-residue chain is Trigger factor (438 aa).

A PPIase FKBP-type domain is found at 163-248 (GDIITIDYEG…VKEIKRKELA (86 aa)).

The protein belongs to the FKBP-type PPIase family. Tig subfamily.

It localises to the cytoplasm. It carries out the reaction [protein]-peptidylproline (omega=180) = [protein]-peptidylproline (omega=0). Involved in protein export. Acts as a chaperone by maintaining the newly synthesized protein in an open conformation. Functions as a peptidyl-prolyl cis-trans isomerase. This is Trigger factor from Desulforudis audaxviator (strain MP104C).